A 297-amino-acid polypeptide reads, in one-letter code: UDP-3-O-acyl-N-acetylglucosamine deacetylase (297 aa).

Zn(2+)-binding residues include His-77, His-236, and Asp-240. The active-site Proton donor is the His-263.

The protein belongs to the LpxC family. Zn(2+) is required as a cofactor.

The catalysed reaction is a UDP-3-O-[(3R)-3-hydroxyacyl]-N-acetyl-alpha-D-glucosamine + H2O = a UDP-3-O-[(3R)-3-hydroxyacyl]-alpha-D-glucosamine + acetate. Its pathway is glycolipid biosynthesis; lipid IV(A) biosynthesis; lipid IV(A) from (3R)-3-hydroxytetradecanoyl-[acyl-carrier-protein] and UDP-N-acetyl-alpha-D-glucosamine: step 2/6. In terms of biological role, catalyzes the hydrolysis of UDP-3-O-myristoyl-N-acetylglucosamine to form UDP-3-O-myristoylglucosamine and acetate, the committed step in lipid A biosynthesis. In Psychrobacter sp. (strain PRwf-1), this protein is UDP-3-O-acyl-N-acetylglucosamine deacetylase.